A 499-amino-acid polypeptide reads, in one-letter code: Putative DBH-like monooxygenase protein 2 (499 aa).

Positions 1–16 (MAHDLLFRLFPLLALG) are cleaved as a signal peptide. Positions 40–156 (NVIFLRWDFD…NTVRVLAAYG (117 aa)) constitute a DOMON domain. Tyr-209 is an active-site residue. 2 disulfide bridges follow: Cys-211–Cys-261 and Cys-248–Cys-271. The N-linked (GlcNAc...) asparagine glycan is linked to Asn-236. His-241 and His-242 together coordinate Cu cation. An N-linked (GlcNAc...) asparagine glycan is attached at Asn-250. Cu cation-binding residues include His-308, His-389, and His-391. Intrachain disulfides connect Cys-365–Cys-480 and Cys-443–Cys-465. His-389 is an active-site residue. Asn-404 carries N-linked (GlcNAc...) asparagine glycosylation. Met-464 is a binding site for Cu cation. The N-linked (GlcNAc...) asparagine glycan is linked to Asn-476.

This sequence belongs to the copper type II ascorbate-dependent monooxygenase family. It depends on Cu(2+) as a cofactor.

This is Putative DBH-like monooxygenase protein 2 (MOXD2P) from Homo sapiens (Human).